The chain runs to 264 residues: Galectin-3 (264 aa).

Residues 1-105 (MADSFSLNDA…GAFPGQPGAP (105 aa)) are disordered. N-acetylalanine is present on Ala-2. The residue at position 6 (Ser-6) is a Phosphoserine; by CK1. Tandem repeats lie at residues 35–43 (YPGAAYPGA), 44–52 (YPGQAPPGA), 53–61 (YPGQAPPGA), 62–70 (YPGQAPPSA), 71–79 (YPGPTAPGA), 80–88 (YPGPTAPGA), 89–97 (YPGQPAPGA), and 98–107 (FPGQPGAPGA). Positions 35-114 (YPGAAYPGAY…PGAYPQCSGG (80 aa)) are 9 X 9 AA tandem repeats of Y-P-G-X(3)-P-[GS]-A. A compositionally biased stretch (low complexity) spans 37–46 (GAAYPGAYPG). Over residues 47-75 (QAPPGAYPGQAPPGAYPGQAPPSAYPGPT) the composition is skewed to pro residues. Positions 76 to 105 (APGAYPGPTAPGAYPGQPAPGAFPGQPGAP) are enriched in low complexity. The stretch at 108–114 (YPQCSGG) is one 9; truncated repeat. The Galectin domain maps to 132–262 (YDLPLPGGVM…DITLTSANHA (131 aa)). Position 195-201 (195-201 (WGKEERQ)) interacts with a beta-D-galactoside. At Ser-202 the chain carries Phosphoserine. A Nuclear export signal motif is present at residues 240 to 255 (KNLREISQLGISGDIT).

Probably forms homo- or heterodimers. Interacts with DMBT1. Interacts with CD6 and ALCAM. Forms a complex with the ITGA3, ITGB1 and CSPG4. Interacts with LGALS3BP, LYPD3, ZFTRAF1 and UACA. Interacts with TRIM16; this interaction mediates autophagy of damage endomembranes. Interacts with and inhibits by binding NCR3/NKp30. As to expression, the highest levels are found in activated macrophages.

It is found in the cytoplasm. The protein resides in the nucleus. The protein localises to the secreted. Functionally, galactose-specific lectin which binds IgE. May mediate with the alpha-3, beta-1 integrin the stimulation by CSPG4 of endothelial cells migration. Together with DMBT1, required for terminal differentiation of columnar epithelial cells during early embryogenesis. In the nucleus: acts as a pre-mRNA splicing factor. Involved in acute inflammatory responses including neutrophil activation and adhesion, chemoattraction of monocytes macrophages, opsonization of apoptotic neutrophils, and activation of mast cells. Together with TRIM16, coordinates the recognition of membrane damage with mobilization of the core autophagy regulators ATG16L1 and BECN1 in response to damaged endomembranes. When secreted, interacts with NK cell-activating receptor NCR3/NKp30 acting as an inhibitory ligand which antagonizes NK cell attack. This Mus musculus (Mouse) protein is Galectin-3 (Lgals3).